We begin with the raw amino-acid sequence, 386 residues long: Innexin inx4 (386 aa).

Topologically, residues Met1–Asp21 are cytoplasmic. The helical transmembrane segment at Leu22 to Leu42 threads the bilayer. The Extracellular segment spans residues Ser43–Tyr111. Residues Gln112–Trp132 form a helical membrane-spanning segment. At Lys133–Thr187 the chain is on the cytoplasmic side. Residues Leu188–Phe208 form a helical membrane-spanning segment. Topologically, residues Trp209 to Ala272 are extracellular. A helical transmembrane segment spans residues Phe273–Ile293. Residues Val294–Val386 lie on the Cytoplasmic side of the membrane. Positions His358 to Val386 are disordered. Residues Phe374–Val386 are compositionally biased toward acidic residues.

This sequence belongs to the pannexin family.

It localises to the cell membrane. The protein resides in the cell junction. It is found in the gap junction. In terms of biological role, structural component of gap junctions. Required for normal development of ovary. Required for normal egg production after blood meal. Required for normal development of testis. (Microbial infection) Modulates the development of Plasmodium falciparum oocysts. This is Innexin inx4 from Anopheles gambiae (African malaria mosquito).